The primary structure comprises 210 residues: 2-hydroxy-3-keto-5-methylthiopentenyl-1-phosphate phosphatase (210 aa).

Belongs to the HAD-like hydrolase superfamily. MtnX family.

The catalysed reaction is 2-hydroxy-5-methylsulfanyl-3-oxopent-1-enyl phosphate + H2O = 1,2-dihydroxy-5-(methylsulfanyl)pent-1-en-3-one + phosphate. Its pathway is amino-acid biosynthesis; L-methionine biosynthesis via salvage pathway; L-methionine from S-methyl-5-thio-alpha-D-ribose 1-phosphate: step 4/6. Dephosphorylates 2-hydroxy-3-keto-5-methylthiopentenyl-1-phosphate (HK-MTPenyl-1-P) yielding 1,2-dihydroxy-3-keto-5-methylthiopentene (DHK-MTPene). This Microcystis aeruginosa (strain NIES-843 / IAM M-2473) protein is 2-hydroxy-3-keto-5-methylthiopentenyl-1-phosphate phosphatase.